A 177-amino-acid polypeptide reads, in one-letter code: MSSESESGGDFHEMREPRIEKVVVHMGIGHGGRDLANAEDILGEITGQMPVRTKAKRTVGEFDIREGDPIGAKVTLRDEMAEEFLQTALPLAELATSQFDDTGNFSFGVEEHTEFPSQEYDPSIGIYGLDVTVNLVRPGYRVAKRDKASRSIPTKHRLNPADAVAFIESTYDVEVSE.

It belongs to the universal ribosomal protein uL5 family. Part of the 50S ribosomal subunit. Interacts with protein L18 and the 5S rRNA, and probably with tRNAs. Forms a bridge to the 30S subunit in the 70S ribosome.

Its function is as follows. This is 1 of 5 proteins that mediates the attachment of the 5S rRNA onto the large ribosomal subunit, stabilizing the orientation of adjacent RNA domains. Forms part of the central protuberance. Modeling places the A and P site tRNAs in close proximity to this protein; the 5S rRNA and some of its associated proteins might help stabilize positioning of ribosome-bound tRNAs. In the 70S ribosome it is thought to contact protein S13 of the 30S subunit (bridge B1b), connecting the 2 subunits; this bridge is implicated in subunit movement. This chain is Large ribosomal subunit protein uL5 (rpl5), found in Haloarcula marismortui (strain ATCC 43049 / DSM 3752 / JCM 8966 / VKM B-1809) (Halobacterium marismortui).